A 1161-amino-acid chain; its full sequence is Lethal(2) giant larvae protein (1161 aa).

A phospho-regulated basic and hydrophobic (PRBH) motif region spans residues 15–86 (DRHRLQKDLF…NNSASELNVQ (72 aa)). 8 WD repeats span residues 39–72 (SALA…LYGQ), 82–128 (ELNV…DGKL), 131–167 (VSSL…EPVI), 189–223 (SIRQ…QRAY), 231–263 (SVGL…PEPP), 278–320 (SINR…GHKV), 328–358 (VIDF…AYDL), and 380–464 (TCNY…YNFK). Phosphoserine occurs at positions 473 and 484. WD repeat units follow at residues 513 to 594 (KKIA…SGVL) and 603 to 664 (TCMA…LRES). The residue at position 679 (S679) is a Phosphoserine. 4 WD repeats span residues 708-778 (VRCL…KEIQ), 787-832 (GISI…LKPI), 837-927 (LTAN…LNAA), and 941-964 (CFTN…ALAT). S808, S869, S876, S887, S889, and S893 each carry phosphoserine. The residue at position 1013 (S1013) is a Phosphoserine. Residues 1141 to 1161 (EKTNGDNKIGTPKTAPEESQF) are disordered.

Belongs to the WD repeat L(2)GL family. As to quaternary structure, may form multimeric complexes. Interacts with mahj. Interacts with aPKC; leading to phosphorylation. Interacts with ball. Phosphorylated by aPKC which lowers lipid affinity and promotes dissociation from the cell cortex. In developing oocytes, aPKC-mediated phosphorylation restricts activity to the oocyte posterior and is required for oocyte polarity formation. Expressed in the epithelial cells of the digestive tract and in gonads.

It localises to the cytoplasm. It is found in the cell cortex. Essential for the development of polarized epithelia, for cell polarity associated with asymmetric cell division of neuroblasts during development, and for oocyte polarity formation. Promotes the formation of actin-rich projections at the oocyte cortex and the posterior enrichment of par-1 which is required for oocyte polarization. Regulates the localization of axis-specifying morphogens such as stau and grk. Its function is as follows. Has an essential role in control of cell proliferation and differentiation during development and could act as a tumor suppressor. Functionally, has an accessory function in control of cell proliferation and differentiation during development. This Drosophila melanogaster (Fruit fly) protein is Lethal(2) giant larvae protein (l(2)gl).